The primary structure comprises 156 residues: Small ribosomal subunit protein uS7 (156 aa).

The protein belongs to the universal ribosomal protein uS7 family. In terms of assembly, part of the 30S ribosomal subunit. Contacts proteins S9 and S11.

Functionally, one of the primary rRNA binding proteins, it binds directly to 16S rRNA where it nucleates assembly of the head domain of the 30S subunit. Is located at the subunit interface close to the decoding center, probably blocks exit of the E-site tRNA. The chain is Small ribosomal subunit protein uS7 from Treponema pallidum (strain Nichols).